Consider the following 445-residue polypeptide: MKLRSTALVKGFRQSTPYVNAHRGKTMVIMLGGEAVADRNFGNIISDIALLHSLGVKIVLVHGARPQINQLLEKQDCHTPYHKNIRVTDEYSLGVAMQAAGQLQLAITARLSMSLNNTPMAGTQLNVMSGNFITAQPLGVDDGTDYCHSGRIRRIDIEGINRTLDQGSIVLLGPIASSVTGESFNLLSEEVATQVAIRLKADKLIGFCSEQGVTDESGNVLAELFPKDAKQILERLTESQNPAEDMSTGTLRFLKGAISACRAGVPRCHLISYKVDGALIQELFSFDGIGTQVVMASAEQVRQAQIDDIGGIFDLIRPLEEQGILVRRSREQLEQEVHRFTIIEKDGLIIGCAALYAYPEDHMAEMACVAIHPDYRDGNRGQILLDYMRHQSKSRDIDQIFVLTTHSLHWFREQGFYEIAVDELPMEKQGLYNYQRNSKILALNV.

Residues 299 to 438 enclose the N-acetyltransferase domain; that stretch reads EQVRQAQIDD…QGLYNYQRNS (140 aa).

The protein belongs to the acetyltransferase family. ArgA subfamily.

It localises to the cytoplasm. The catalysed reaction is L-glutamate + acetyl-CoA = N-acetyl-L-glutamate + CoA + H(+). It participates in amino-acid biosynthesis; L-arginine biosynthesis; N(2)-acetyl-L-ornithine from L-glutamate: step 1/4. This is Amino-acid acetyltransferase from Vibrio atlanticus (strain LGP32) (Vibrio splendidus (strain Mel32)).